A 1047-amino-acid chain; its full sequence is MALPSLLLVVAALAGGVRPPGARNLTLAVVLPEHNLSYAWAWPRVGPAVALAVEALGRALPVDLRFVSSELDGACSEYLAPLRAVDLKLYHDPDLLLGPGCVYPAASVARFASHWRLPLLTAGAVASGFAAKNEHYRTLVRTGPSAPKLGEFVVTLHGHFNWTARAALLYLDARTDDRPHYFTIEGVFEALQGSNLSVQHQVYAREPGGPEQATHFIRANGRIVYICGPLEMLHEILLQAQRENLTNGDYVFFYLDVFGESLRAGPTRATGRPWQDNRTQEQAQALREAFQTVLVITYREPPNPEYQEFQNRLLIRAREDFGVELAPSLMNLIAGCFYDGILLYAQVLNETIQEGGTREDGLRIVEKMQGRRYHGVTGLVVMDKNNDRETDFVLWAMGDLDSGDFQPAAHYSGAEKQIWWTGRPIPWVKGAPPLDNPPCAFDLDDPSCDKTPLSTLAIVALGTGVTFIMFGVSSFLIFRKLMLEKELASMLWRIRWEELQFGNSDRYHKGAGSRLTLSLRGSSYGSLMTAHGKYQIFANTGHFKGNVVAIKHVNKKRIELTRQVLFELKHMRDVQFNHLTRFIGACIDPPNICIVTEYCPRGSLQDILENDSINLDWMFRYSLINDLVKGMAFLHNSIISSHGSLKSSNCVVDSRFVLKITDYGLASFRSTAEPDDSHALYAKKLWTAPELLSGNPLPTTGMQKADVYSFAIILQEIALRSGPFYLEGLDLSPKEIVQKVRNGQRPYFRPSIDRTQLNEELVLLMERCWAQDPTERPDFGQIKGFIRRFNKEGGTSILDNLLLRMEQYANNLEKLVEERTQAYLEEKRKAEALLYQILPHSVAEQLKRGETVQAEAFDSVTIYFSDIVGFTALSAESTPMQVVTLLNDLYTCFDAIIDNFDVYKVETIGDAYMVVSGLPGRNGQRHAPEIARMALALLDAVSSFRIRHRPHDQLRLRIGVHTGPVCAGVVGLKMPRYCLFGDTVNTASRMESNGQALKIHVSSTTKDALDELGCFQLELRGDVEMKGKGKMRTYWLLGEQKGPPGLL.

A signal peptide spans 1–16 (MALPSLLLVVAALAGG). Residues 17 to 458 (VRPPGARNLT…DKTPLSTLAI (442 aa)) are Extracellular-facing. Asn-24 and Asn-35 each carry an N-linked (GlcNAc...) asparagine glycan. The cysteines at positions 75 and 101 are disulfide-linked. N-linked (GlcNAc...) asparagine glycans are attached at residues Asn-161, Asn-195, Asn-244, Asn-277, and Asn-349. The helical transmembrane segment at 459-478 (VALGTGVTFIMFGVSSFLIF) threads the bilayer. Residues 479–1047 (RKLMLEKELA…GEQKGPPGLL (569 aa)) are Cytoplasmic-facing. The residue at position 513 (Ser-513) is a Phosphoserine. One can recognise a Protein kinase domain in the interval 513–786 (SRLTLSLRGS…PDFGQIKGFI (274 aa)). Thr-516 carries the post-translational modification Phosphothreonine. A phosphoserine mark is found at Ser-518, Ser-522, Ser-523, and Ser-526. A Phosphothreonine modification is found at Thr-529. One can recognise a Guanylate cyclase domain in the interval 861–991 (TIYFSDIVGF…DTVNTASRME (131 aa)).

This sequence belongs to the adenylyl cyclase class-4/guanylyl cyclase family. Phosphorylated. Phosphorylation of the protein kinase-like domain is required for full activation by CNP. In terms of processing, glycosylated. In terms of tissue distribution, widely expressed. Expressed in the columnar proliferating and prehypertrophic chondrocyte layers of the tibia.

It localises to the cell membrane. It carries out the reaction GTP = 3',5'-cyclic GMP + diphosphate. Receptor for the C-type natriuretic peptide NPPC/CNP hormone. Has guanylate cyclase activity upon binding of its ligand. May play a role in the regulation of skeletal growth. In Mus musculus (Mouse), this protein is Atrial natriuretic peptide receptor 2 (Npr2).